Consider the following 105-residue polypeptide: uncharacterized protein (105 aa).

Transmembrane regions (helical) follow at residues 14 to 34 (ILLM…IVAW), 41 to 61 (ETVC…FAFL), and 80 to 100 (VGFT…IFTI).

The protein localises to the cell membrane. This is an uncharacterized protein from Treponema pallidum (strain Nichols).